The sequence spans 508 residues: Cytochrome P450 monooxygenase dmxR5 (508 aa).

A helical transmembrane segment spans residues 24-44 (LTLGLGAILVVLMSFLAFLSY). N-linked (GlcNAc...) asparagine glycans are attached at residues asparagine 387 and asparagine 405. Cysteine 451 provides a ligand contact to heme. Asparagine 462 carries N-linked (GlcNAc...) asparagine glycosylation. The segment at 481–508 (EHKKSTQESGHGVPLPSKLSKFSPREEN) is disordered.

This sequence belongs to the cytochrome P450 family. Heme serves as cofactor.

Its subcellular location is the membrane. It participates in secondary metabolite biosynthesis. Cytochrome P450 monooxygenase; part of the gene cluster that mediates the biosynthesis of the dimeric xanthones cryptosporioptides. The pathway begins with the synthesis of atrochrysone thioester by the polyketide synthase dmx-nrPKS. The atrochrysone carboxyl ACP thioesterase dmxR1 then breaks the thioester bond and releases the atrochrysone carboxylic acid from dmx-nrPKS. Atrochrysone carboxylic acid is decarboxylated by the decarboxylase dmxR15, and oxidized by the anthrone oxygenase dmxR16 to yield emodin. Emodin is then reduced to emodin hydroquinone by the oxidoreductase dmxR7. A-ring reduction by the short chain dehydrogenase dmxR18, dehydration by the scytalone dehydratase-like protein dmxR17 and probable spontaneous re-oxidation, results in overall deoxygenation to chrysophanol. Baeyer-Villiger oxidation by the Baeyer-Villiger monooxygenase (BVMO) dmxR6 then yields monodictylactone in equilibrium with monodictyphenone. In the case of the cryptosporioptides biosynthesis, monodictylactone is reduced at C-12 to an alcohol (by the short chain dehydrogenases dmxR12 or dmxR8) and hydroxylated at C-5 by dmxR9, yielding the electron-rich aromatic which could eliminate H(2)O to form the ortho-quinonemethide, followed by tautomerisation to paraquinone and complete the formal reduction to produce the 10-methylgroup. Conjugate addition of C-4a-OH to the resulting paraquinone by the monooxygenase dmxR10 then gives cyclohexadienone, which is then reduced at C-5 by the short chain dehydrogenase dmxR3 to give the dihydroxanthone. The 6,7-epoxide in the cryptosporioptides could be introduced by the cytochrome P450 monooxygenase dmxL3. The highly reducing PKS dmxL2 manufactures butyrate, which is further carboxylated by dmxL1 to form ethylmalonate. It is not yet clear whether the carboxylation occurs while the butyrate is attached to the ACP of dmxL2, but this unusual fungal metabolite could then be esterified to O-5 by the O-acetyltransferase dmxR13. Finally, dimerization performed by dmxR5 gives the observed dimers cryptosporioptides A, B and C as the final products of the pathway. This is Cytochrome P450 monooxygenase dmxR5 from Cryptosporiopsis sp. (strain 8999).